A 233-amino-acid chain; its full sequence is Aspartate/glutamate leucyltransferase (233 aa).

The protein belongs to the R-transferase family. Bpt subfamily.

It localises to the cytoplasm. It carries out the reaction N-terminal L-glutamyl-[protein] + L-leucyl-tRNA(Leu) = N-terminal L-leucyl-L-glutamyl-[protein] + tRNA(Leu) + H(+). It catalyses the reaction N-terminal L-aspartyl-[protein] + L-leucyl-tRNA(Leu) = N-terminal L-leucyl-L-aspartyl-[protein] + tRNA(Leu) + H(+). Functionally, functions in the N-end rule pathway of protein degradation where it conjugates Leu from its aminoacyl-tRNA to the N-termini of proteins containing an N-terminal aspartate or glutamate. The chain is Aspartate/glutamate leucyltransferase from Vibrio campbellii (strain ATCC BAA-1116).